A 107-amino-acid polypeptide reads, in one-letter code: Serine palmitoyltransferase-regulating protein TSC3 (107 aa).

A helical membrane pass occupies residues 72–92 (VFFLVVFTLSLFGLLKWVLSL).

The protein localises to the endoplasmic reticulum membrane. In terms of biological role, stimulates the activity of serine palmitoyltransferase (SPT). This Eremothecium gossypii (strain ATCC 10895 / CBS 109.51 / FGSC 9923 / NRRL Y-1056) (Yeast) protein is Serine palmitoyltransferase-regulating protein TSC3 (TSC3).